The sequence spans 227 residues: Cytochrome c oxidase subunit 2 (227 aa).

At 1–14 (MAYPMQLGFQDATS) the chain is on the mitochondrial intermembrane side. A helical transmembrane segment spans residues 15 to 45 (PIMEELLHFHDHTLMIVFLISSLVLYIISLM). Topologically, residues 46–59 (LTTKLTHTSTMDAQ) are mitochondrial matrix. Residues 60 to 87 (EVETVWTILPAIILILIALPSLRILYMM) form a helical membrane-spanning segment. Residues 88 to 227 (DEINNPSLTV…HFEEWSASMS (140 aa)) lie on the Mitochondrial intermembrane side of the membrane. Cu cation is bound by residues histidine 161, cysteine 196, glutamate 198, cysteine 200, histidine 204, and methionine 207. Glutamate 198 provides a ligand contact to Mg(2+).

This sequence belongs to the cytochrome c oxidase subunit 2 family. Component of the cytochrome c oxidase (complex IV, CIV), a multisubunit enzyme composed of 14 subunits. The complex is composed of a catalytic core of 3 subunits MT-CO1, MT-CO2 and MT-CO3, encoded in the mitochondrial DNA, and 11 supernumerary subunits COX4I, COX5A, COX5B, COX6A, COX6B, COX6C, COX7A, COX7B, COX7C, COX8 and NDUFA4, which are encoded in the nuclear genome. The complex exists as a monomer or a dimer and forms supercomplexes (SCs) in the inner mitochondrial membrane with NADH-ubiquinone oxidoreductase (complex I, CI) and ubiquinol-cytochrome c oxidoreductase (cytochrome b-c1 complex, complex III, CIII), resulting in different assemblies (supercomplex SCI(1)III(2)IV(1) and megacomplex MCI(2)III(2)IV(2)). Found in a complex with TMEM177, COA6, COX18, COX20, SCO1 and SCO2. Interacts with TMEM177 in a COX20-dependent manner. Interacts with COX20. Interacts with COX16. Cu cation is required as a cofactor.

The protein resides in the mitochondrion inner membrane. The catalysed reaction is 4 Fe(II)-[cytochrome c] + O2 + 8 H(+)(in) = 4 Fe(III)-[cytochrome c] + 2 H2O + 4 H(+)(out). Its function is as follows. Component of the cytochrome c oxidase, the last enzyme in the mitochondrial electron transport chain which drives oxidative phosphorylation. The respiratory chain contains 3 multisubunit complexes succinate dehydrogenase (complex II, CII), ubiquinol-cytochrome c oxidoreductase (cytochrome b-c1 complex, complex III, CIII) and cytochrome c oxidase (complex IV, CIV), that cooperate to transfer electrons derived from NADH and succinate to molecular oxygen, creating an electrochemical gradient over the inner membrane that drives transmembrane transport and the ATP synthase. Cytochrome c oxidase is the component of the respiratory chain that catalyzes the reduction of oxygen to water. Electrons originating from reduced cytochrome c in the intermembrane space (IMS) are transferred via the dinuclear copper A center (CU(A)) of subunit 2 and heme A of subunit 1 to the active site in subunit 1, a binuclear center (BNC) formed by heme A3 and copper B (CU(B)). The BNC reduces molecular oxygen to 2 water molecules using 4 electrons from cytochrome c in the IMS and 4 protons from the mitochondrial matrix. In Antilocapra americana (Pronghorn), this protein is Cytochrome c oxidase subunit 2 (MT-CO2).